The following is a 299-amino-acid chain: AT-hook motif nuclear-localized protein 25 (299 aa).

Disordered stretches follow at residues 1–87 and 216–251; these read MSSY…RDSP and EEET…CESN. Basic and acidic residues-rich tracts occupy residues 14 to 23 and 33 to 42; these read HLQRPEDSRT and NRSEADEAKA. Low complexity-rich tracts occupy residues 44 to 72 and 224 to 239; these read TTPT…PAGS and TTGV…QSSE. The a.T hook DNA-binding region spans 63 to 75; that stretch reads RRPRGRPAGSKNK. Residues 87–233 form the PPC domain; that stretch reads PNVLRSHVLE…TTGVQQQQPE (147 aa). Residues 240–251 are compositionally biased toward polar residues; sequence VTGSGAQACESN.

Homodimer. Interacts with AHL27 and AHL29. In terms of tissue distribution, expressed in seedlings, leaves, stems, floral tips and flowers.

The protein localises to the nucleus. In terms of biological role, transcription factor that specifically binds AT-rich DNA sequences related to the nuclear matrix attachment regions (MARs). Binds the DNA sequence GNFEI (GA-negative feedback element I) in the GA3OX1 promoter. Binding to GNFEI sequence is required for GA-negative feedback regulation of GA3OX1. The chain is AT-hook motif nuclear-localized protein 25 from Arabidopsis thaliana (Mouse-ear cress).